Here is a 90-residue protein sequence, read N- to C-terminus: Non-structural protein NS-S (90 aa).

Belongs to the hantavirus NS-S protein family.

It is found in the host cytoplasm. The protein localises to the host perinuclear region. In terms of biological role, antagonizes host type-I IFN signaling pathway. This Homo sapiens (Human) protein is Non-structural protein NS-S (N).